The sequence spans 195 residues: Large ribosomal subunit protein bL17 (195 aa).

The disordered stretch occupies residues 132–195 (ARGTRFAARK…TEAKDTKPES (64 aa)). Positions 159–186 (PTAAAVAAEAQAEQPTAEAVAADDAATT) are enriched in low complexity.

This sequence belongs to the bacterial ribosomal protein bL17 family. In terms of assembly, part of the 50S ribosomal subunit. Contacts protein L32.

This is Large ribosomal subunit protein bL17 from Parafrankia sp. (strain EAN1pec).